Consider the following 71-residue polypeptide: DNA-directed RNA polymerase subunit omega (71 aa).

This sequence belongs to the RNA polymerase subunit omega family. As to quaternary structure, the RNAP catalytic core consists of 2 alpha, 1 beta, 1 beta' and 1 omega subunit. When a sigma factor is associated with the core the holoenzyme is formed, which can initiate transcription.

It catalyses the reaction RNA(n) + a ribonucleoside 5'-triphosphate = RNA(n+1) + diphosphate. Functionally, promotes RNA polymerase assembly. Latches the N- and C-terminal regions of the beta' subunit thereby facilitating its interaction with the beta and alpha subunits. The protein is DNA-directed RNA polymerase subunit omega of Levilactobacillus brevis (strain ATCC 367 / BCRC 12310 / CIP 105137 / JCM 1170 / LMG 11437 / NCIMB 947 / NCTC 947) (Lactobacillus brevis).